The following is a 410-amino-acid chain: MKVAFETLGCRMNQFDTDLLKNKFIQKGYEVVSFEDMADVYVINTCTVTVGGDRSSRQAIYQAKRRNPKAIVVATGCYAQVNPQELAKLKEVDLVVGNTHKSELLKILEEYLERREKKVVVGEIFREKEVRNFDTVLYFEGVRPFLKVQEGCNKFCTFCVIPYARGKVRSVDLEKIVHQVKLLAQKGFKEVVLTGTQLSQYGWDKGYNLYTLLTELIKIEGIELIRLSSMHIKEMDKELLKLIVSEEKIAPHFHLSLQSGSNRILELMDRGYTREEYEEVVNFIVENRPISSIGTDVIVGFPTESEEDFQETYEFLKRIPISYMHIFPYSDRPFTKASKLKPKLPERIKKERVRILKELDQKKRQEFYEKNKGKELRALVIEENRLLTENYIDIKREGYKEVGKLVRVLI.

Residues 1 to 113 enclose the MTTase N-terminal domain; it reads MKVAFETLGC…LLKILEEYLE (113 aa). Residues C10, C46, C77, C152, C156, and C159 each contribute to the [4Fe-4S] cluster site. In terms of domain architecture, Radical SAM core spans 138-366; it reads YFEGVRPFLK…KELDQKKRQE (229 aa).

The protein belongs to the methylthiotransferase family. MtaB subfamily. The cofactor is [4Fe-4S] cluster.

The protein localises to the cytoplasm. It carries out the reaction N(6)-L-threonylcarbamoyladenosine(37) in tRNA + (sulfur carrier)-SH + AH2 + 2 S-adenosyl-L-methionine = 2-methylsulfanyl-N(6)-L-threonylcarbamoyladenosine(37) in tRNA + (sulfur carrier)-H + 5'-deoxyadenosine + L-methionine + A + S-adenosyl-L-homocysteine + 2 H(+). Catalyzes the methylthiolation of N6-threonylcarbamoyladenosine (t(6)A), leading to the formation of 2-methylthio-N6-threonylcarbamoyladenosine (ms(2)t(6)A) at position 37 in tRNAs that read codons beginning with adenine. This chain is Threonylcarbamoyladenosine tRNA methylthiotransferase MtaB (mtaB), found in Aquifex aeolicus (strain VF5).